The chain runs to 209 residues: Thymidine kinase (209 aa).

ATP contacts are provided by residues 25 to 32 (GCMFAGKT) and 103 to 106 (DEVQ). The active-site Proton acceptor is the glutamate 104. The Zn(2+) site is built by cysteine 160, cysteine 163, cysteine 198, and cysteine 201.

It belongs to the thymidine kinase family. In terms of assembly, homotetramer.

The protein localises to the cytoplasm. The catalysed reaction is thymidine + ATP = dTMP + ADP + H(+). This Mycoplasma mycoides subsp. mycoides SC (strain CCUG 32753 / NCTC 10114 / PG1) protein is Thymidine kinase.